The primary structure comprises 287 residues: uncharacterized protein (287 aa).

The segment at 1-44 (MAAPRNLTGDGGARQLVKDEESPAASSAAKGLLNDDSPTGKRTK) is disordered. A Phosphoserine modification is found at S37. Helical transmembrane passes span 55–75 (FAVF…IYLT), 124–144 (TFMI…FGVV), 147–167 (FVLV…LSKL), 218–238 (PIVD…LMPA), and 260–280 (DFKT…PALL).

The protein localises to the membrane. This is an uncharacterized protein from Arabidopsis thaliana (Mouse-ear cress).